The following is a 131-amino-acid chain: Glycine cleavage system H protein (131 aa).

Positions 24–106 (RVTVGISDHA…YGEGWIFVVE (83 aa)) constitute a Lipoyl-binding domain. K65 is modified (N6-lipoyllysine).

Belongs to the GcvH family. As to quaternary structure, the glycine cleavage system is composed of four proteins: P, T, L and H. (R)-lipoate is required as a cofactor.

In terms of biological role, the glycine cleavage system catalyzes the degradation of glycine. The H protein shuttles the methylamine group of glycine from the P protein to the T protein. In Xanthomonas campestris pv. campestris (strain 8004), this protein is Glycine cleavage system H protein.